The sequence spans 295 residues: 4-hydroxy-tetrahydrodipicolinate synthase (295 aa).

Thr47 provides a ligand contact to pyruvate. The Proton donor/acceptor role is filled by Tyr135. Catalysis depends on Lys163, which acts as the Schiff-base intermediate with substrate. Ile206 serves as a coordination point for pyruvate.

Belongs to the DapA family. In terms of assembly, homodimer.

The protein resides in the cytoplasm. The catalysed reaction is L-aspartate 4-semialdehyde + pyruvate = (2S,4S)-4-hydroxy-2,3,4,5-tetrahydrodipicolinate + H2O + H(+). The protein operates within amino-acid biosynthesis; L-lysine biosynthesis via DAP pathway; (S)-tetrahydrodipicolinate from L-aspartate: step 3/4. Catalyzes the condensation of (S)-aspartate-beta-semialdehyde [(S)-ASA] and pyruvate to 4-hydroxy-tetrahydrodipicolinate (HTPA). In Staphylococcus aureus (strain bovine RF122 / ET3-1), this protein is 4-hydroxy-tetrahydrodipicolinate synthase.